The following is a 329-amino-acid chain: Cytosolic arginine sensor for mTORC1 subunit 2 (329 aa).

ACT domains are found at residues 72–139 (ADAT…MHTL) and 262–322 (ELWK…NALQ).

Belongs to the GATS family. In terms of assembly, may form homodimers and heterodimers.

The protein resides in the cytoplasm. Its subcellular location is the cytosol. Its function is as follows. Functions as a negative regulator of the TORC1 signaling pathway. This chain is Cytosolic arginine sensor for mTORC1 subunit 2, found in Xenopus laevis (African clawed frog).